We begin with the raw amino-acid sequence, 428 residues long: Histidinol dehydrogenase (428 aa).

Residues Tyr-125, Gln-186, and Asn-209 each coordinate NAD(+). Substrate contacts are provided by Ser-232, Gln-254, and His-257. Gln-254 and His-257 together coordinate Zn(2+). Residues Glu-322 and His-323 each act as proton acceptor in the active site. The substrate site is built by His-323, Asp-356, Glu-410, and His-415. Asp-356 contributes to the Zn(2+) binding site. His-415 contacts Zn(2+).

Belongs to the histidinol dehydrogenase family. Zn(2+) serves as cofactor.

It catalyses the reaction L-histidinol + 2 NAD(+) + H2O = L-histidine + 2 NADH + 3 H(+). It participates in amino-acid biosynthesis; L-histidine biosynthesis; L-histidine from 5-phospho-alpha-D-ribose 1-diphosphate: step 9/9. Catalyzes the sequential NAD-dependent oxidations of L-histidinol to L-histidinaldehyde and then to L-histidine. The sequence is that of Histidinol dehydrogenase from Lactiplantibacillus plantarum (strain ATCC BAA-793 / NCIMB 8826 / WCFS1) (Lactobacillus plantarum).